Here is a 157-residue protein sequence, read N- to C-terminus: Protein Smg homolog (157 aa).

Belongs to the Smg family.

The polypeptide is Protein Smg homolog (Shewanella woodyi (strain ATCC 51908 / MS32)).